We begin with the raw amino-acid sequence, 89 residues long: Sugar transporter SemiSWEET (89 aa).

3 helical membrane passes run 4–27 (ILLTGLFAAFFTTFAFAPQSIKTI), 35–55 (ISVVMYIMFLTGVISWIAYGI), and 60–82 (FAVLIANIVTLFLAAPVLVITLI). Positions 7 to 59 (TGLFAAFFTTFAFAPQSIKTIRTRNTEGISVVMYIMFLTGVISWIAYGIMRSD) constitute a PQ-loop domain.

As to quaternary structure, homodimer.

It is found in the cell membrane. The homodimer mediates transmembrane sugar transport down a concentration gradient. Transport is probably effected by rocking-type movements, where a cargo-binding cavity opens first on one and then on the other side of the membrane. This chain is Sugar transporter SemiSWEET, found in Escherichia coli (strain UMEA 3162-1).